Reading from the N-terminus, the 354-residue chain is Uroporphyrinogen decarboxylase (354 aa).

Residues 27 to 31 (RQAGR), aspartate 77, tyrosine 154, threonine 209, and histidine 327 each bind substrate.

The protein belongs to the uroporphyrinogen decarboxylase family. As to quaternary structure, homodimer.

The protein resides in the cytoplasm. It carries out the reaction uroporphyrinogen III + 4 H(+) = coproporphyrinogen III + 4 CO2. The protein operates within porphyrin-containing compound metabolism; protoporphyrin-IX biosynthesis; coproporphyrinogen-III from 5-aminolevulinate: step 4/4. Functionally, catalyzes the decarboxylation of four acetate groups of uroporphyrinogen-III to yield coproporphyrinogen-III. The protein is Uroporphyrinogen decarboxylase of Escherichia coli O7:K1 (strain IAI39 / ExPEC).